Consider the following 379-residue polypeptide: Heme chaperone HemW (379 aa).

The region spanning 1-233 is the Radical SAM core domain; it reads MKSAYIHIPF…MSKMEAHGIH (233 aa). Residue tyrosine 5 participates in S-adenosyl-L-methionine binding. 3 residues coordinate [4Fe-4S] cluster: cysteine 11, cysteine 15, and cysteine 18. Residues glycine 60, 61–62, glutamate 94, glutamine 121, arginine 133, and aspartate 158 contribute to the S-adenosyl-L-methionine site; that span reads GT.

Belongs to the anaerobic coproporphyrinogen-III oxidase family. HemW subfamily. The cofactor is [4Fe-4S] cluster.

Its subcellular location is the cytoplasm. Functionally, probably acts as a heme chaperone, transferring heme to an unknown acceptor. Binds one molecule of heme per monomer, possibly covalently. Binds 1 [4Fe-4S] cluster. The cluster is coordinated with 3 cysteines and an exchangeable S-adenosyl-L-methionine. The sequence is that of Heme chaperone HemW from Bacillus subtilis (strain 168).